Reading from the N-terminus, the 615-residue chain is Medium-chain acyl-CoA ligase ACSF2, mitochondrial (615 aa).

The transit peptide at 1 to 41 (MAVYVGMLRLGRLCAGSSGVLGARAALSRSWQEARLQGVRF) directs the protein to the mitochondrion. Lysine 179 is modified (N6-acetyllysine). At lysine 182 the chain carries N6-acetyllysine; alternate. The residue at position 182 (lysine 182) is an N6-succinyllysine; alternate. Position 263–271 (263–271 (TSGTTGSPK)) interacts with ATP. N6-acetyllysine occurs at positions 340 and 398. At lysine 478 the chain carries N6-succinyllysine. ATP contacts are provided by aspartate 493 and arginine 508. Lysine 510 is subject to N6-acetyllysine. Residues lysine 544 and lysine 570 each carry the N6-acetyllysine; alternate modification. Residues lysine 544 and lysine 570 each carry the N6-succinyllysine; alternate modification. Lysine 599 contacts ATP. Lysine 599 is modified (N6-succinyllysine).

This sequence belongs to the ATP-dependent AMP-binding enzyme family.

The protein resides in the mitochondrion. The catalysed reaction is a medium-chain fatty acid + ATP + CoA = a medium-chain fatty acyl-CoA + AMP + diphosphate. It carries out the reaction octanoate + ATP + CoA = octanoyl-CoA + AMP + diphosphate. In terms of biological role, acyl-CoA synthases catalyze the initial reaction in fatty acid metabolism, by forming a thioester with CoA. Has some preference toward medium-chain substrates. Plays a role in adipocyte differentiation. The polypeptide is Medium-chain acyl-CoA ligase ACSF2, mitochondrial (Homo sapiens (Human)).